Here is a 140-residue protein sequence, read N- to C-terminus: uncharacterized protein (140 aa).

The segment covering 1–15 (MQRQTGHMEDKKRTG) has biased composition (basic and acidic residues). Positions 1–34 (MQRQTGHMEDKKRTGLESQGTENAFSDGRDGKDG) are disordered.

This is an uncharacterized protein from Gallus gallus (Chicken).